A 117-amino-acid polypeptide reads, in one-letter code: Huntingtin-interacting protein M (117 aa).

Disordered stretches follow at residues 1-30 (MSEK…VPRS) and 71-117 (EASN…RKND). A compositionally biased stretch (polar residues) spans 72 to 81 (ASNNGSMRNT). Positions 82-117 (SQDREREVDNNREPHSAESDVTRFLFDEMPKSRKND) are enriched in basic and acidic residues.

May interact with the N-terminus of HD.

The chain is Huntingtin-interacting protein M from Homo sapiens (Human).